The following is a 147-amino-acid chain: MERPLTVLQVSLYHPTQGPVAFAHVPQQLQHDASRLLVGRGQNTHLQLQLPQLSRYHLSLEPYLEKGSSLLAFCLKVLTRKSCVWVNGLPLRYLEQVPLGTINRISFSGIQMLVRKEGGASLETFVCYFHLSPSPLIYRPKAQETDE.

The 73-residue stretch at 36–108 (LLVGRGQNTH…LGTINRISFS (73 aa)) folds into the FHA domain.

In terms of assembly, interacts with TIFA. As to expression, expressed at high levels in spleen and at moderate levels in lung, thymus, and small intestine.

In terms of biological role, inhibits TIFA-mediated TRAF6 activation possibly by inducing a conformational change in TIFA. The sequence is that of TRAF-interacting protein with FHA domain-containing protein B from Mus musculus (Mouse).